The primary structure comprises 173 residues: Probable chemoreceptor glutamine deamidase CheD 2 (173 aa).

Belongs to the CheD family.

The enzyme catalyses L-glutaminyl-[protein] + H2O = L-glutamyl-[protein] + NH4(+). Its function is as follows. Probably deamidates glutamine residues to glutamate on methyl-accepting chemotaxis receptors (MCPs), playing an important role in chemotaxis. This is Probable chemoreceptor glutamine deamidase CheD 2 from Albidiferax ferrireducens (strain ATCC BAA-621 / DSM 15236 / T118) (Rhodoferax ferrireducens).